The sequence spans 124 residues: Small ribosomal subunit protein uS12 (124 aa).

Asp-89 is subject to 3-methylthioaspartic acid.

The protein belongs to the universal ribosomal protein uS12 family. As to quaternary structure, part of the 30S ribosomal subunit. Contacts proteins S8 and S17. May interact with IF1 in the 30S initiation complex.

Functionally, with S4 and S5 plays an important role in translational accuracy. Its function is as follows. Interacts with and stabilizes bases of the 16S rRNA that are involved in tRNA selection in the A site and with the mRNA backbone. Located at the interface of the 30S and 50S subunits, it traverses the body of the 30S subunit contacting proteins on the other side and probably holding the rRNA structure together. The combined cluster of proteins S8, S12 and S17 appears to hold together the shoulder and platform of the 30S subunit. This is Small ribosomal subunit protein uS12 from Aliivibrio salmonicida (strain LFI1238) (Vibrio salmonicida (strain LFI1238)).